A 583-amino-acid polypeptide reads, in one-letter code: ATP-dependent lipid A-core flippase (583 aa).

The next 7 helical transmembrane spans lie at 18-38 (LWPI…TLII), 65-85 (IFMW…MSGF), 105-127 (LLFN…ATLM), 143-163 (GALI…IMMF), 167-187 (WQLS…IKLV), 252-272 (VFEP…LYIA), and 277-297 (VIEM…IALM). One can recognise an ABC transmembrane type-1 domain in the interval 30–312 (IIASITLIIN…LTNVSAQFQR (283 aa)). The region spanning 344 to 580 (IIFDNVTFFY…KGVYSQLYKF (237 aa)) is the ABC transporter domain. 378-385 (GRSGSGKS) contributes to the ATP binding site.

This sequence belongs to the ABC transporter superfamily. Lipid exporter (TC 3.A.1.106) family. Homodimer.

It is found in the cell inner membrane. The catalysed reaction is ATP + H2O + lipid A-core oligosaccharideSide 1 = ADP + phosphate + lipid A-core oligosaccharideSide 2.. Involved in lipopolysaccharide (LPS) biosynthesis. Translocates lipid A-core from the inner to the outer leaflet of the inner membrane. Transmembrane domains (TMD) form a pore in the inner membrane and the ATP-binding domain (NBD) is responsible for energy generation. This chain is ATP-dependent lipid A-core flippase, found in Blochmanniella floridana.